The chain runs to 270 residues: MTCRVGLTEWRLAPSGAAAIRLAAAVGADGIQLDFGGPGRGVLVDGPGRAGQLRAVADEAGVDLLALAGNLLNDIGLTSQPAVVQPVLARLADTATELGVPLLIVPSFRRSAITDAMSFTRTAAALRWAVSLAEARGIVLASENVLPPARARQLVEEVGSPAFRLLLDTFNPVRYGLDPAWLATELRPWWADQIHLKDGPPDTGPSPLLGAGQGGVRRTLTALRGSPAPVRALVLENDYRDGHGARLRADLEWARRAAVNARESEKGKLT.

Residues Glu-143 and Glu-236 each act as proton donor/acceptor in the active site.

It belongs to the hyi family.

It catalyses the reaction 2-epi-5-epi-valiolone 7-phosphate = 5-epi-valiolone 7-phosphate. In terms of biological role, involved in the biosynthesis of the alpha-glucosidase inhibitor acarbose. Catalyzes the 2-epimerisation of 2-epi-5-epivaliolone 7-phosphate to yield 5-epi-valiolone 7-phosphate. This chain is 2-epi-5-epi-valiolone 7-phosphate 2-epimerase (acbO), found in Actinoplanes sp. (strain ATCC 31044 / CBS 674.73 / SE50/110).